The primary structure comprises 273 residues: Dermonecrotic toxin (273 aa).

Positions 20 and 22 each coordinate Mg(2+). His35 serves as the catalytic Nucleophile. A disulfide bond links Cys39 and Cys45. Asp79 contacts Mg(2+).

It belongs to the arthropod phospholipase D family. Class I subfamily. It depends on Mg(2+) as a cofactor. Expressed by the venom gland.

The protein localises to the secreted. It catalyses the reaction an N-(acyl)-sphingosylphosphocholine = an N-(acyl)-sphingosyl-1,3-cyclic phosphate + choline. The catalysed reaction is an N-(acyl)-sphingosylphosphoethanolamine = an N-(acyl)-sphingosyl-1,3-cyclic phosphate + ethanolamine. The enzyme catalyses a 1-acyl-sn-glycero-3-phosphocholine = a 1-acyl-sn-glycero-2,3-cyclic phosphate + choline. It carries out the reaction a 1-acyl-sn-glycero-3-phosphoethanolamine = a 1-acyl-sn-glycero-2,3-cyclic phosphate + ethanolamine. In terms of biological role, dermonecrotic toxins cleave the phosphodiester linkage between the phosphate and headgroup of certain phospholipids (sphingolipid and lysolipid substrates), forming an alcohol (often choline) and a cyclic phosphate. This toxin acts on sphingomyelin (SM). It may also act on ceramide phosphoethanolamine (CPE), lysophosphatidylcholine (LPC) and lysophosphatidylethanolamine (LPE), but not on lysophosphatidylserine (LPS), and lysophosphatidylglycerol (LPG). It acts by transphosphatidylation, releasing exclusively cyclic phosphate products as second products. Induces dermonecrosis, hemolysis, increased vascular permeability, edema, inflammatory response, and platelet aggregation. The polypeptide is Dermonecrotic toxin (Loxosceles laeta (South American recluse spider)).